Consider the following 446-residue polypeptide: tRNA-2-methylthio-N(6)-dimethylallyladenosine synthase (446 aa).

The 122-residue stretch at 3-124 (KKLYIKTYGC…LPELISKVVR (122 aa)) folds into the MTTase N-terminal domain. [4Fe-4S] cluster-binding residues include Cys-12, Cys-48, Cys-87, Cys-162, Cys-166, and Cys-169. In terms of domain architecture, Radical SAM core spans 148–380 (YPQGASAFIS…QKELSSQQLA (233 aa)). In terms of domain architecture, TRAM spans 383–446 (ESCVGSTMKV…SNSLTGEIYT (64 aa)).

It belongs to the methylthiotransferase family. MiaB subfamily. In terms of assembly, monomer. The cofactor is [4Fe-4S] cluster.

The protein localises to the cytoplasm. It carries out the reaction N(6)-dimethylallyladenosine(37) in tRNA + (sulfur carrier)-SH + AH2 + 2 S-adenosyl-L-methionine = 2-methylsulfanyl-N(6)-dimethylallyladenosine(37) in tRNA + (sulfur carrier)-H + 5'-deoxyadenosine + L-methionine + A + S-adenosyl-L-homocysteine + 2 H(+). Its function is as follows. Catalyzes the methylthiolation of N6-(dimethylallyl)adenosine (i(6)A), leading to the formation of 2-methylthio-N6-(dimethylallyl)adenosine (ms(2)i(6)A) at position 37 in tRNAs that read codons beginning with uridine. This is tRNA-2-methylthio-N(6)-dimethylallyladenosine synthase from Rickettsia canadensis (strain McKiel).